The following is a 961-amino-acid chain: Exportin-T (961 aa).

This sequence belongs to the exportin family.

It localises to the cytoplasm. The protein localises to the nucleus. Its function is as follows. Mediates the nuclear export of aminoacylated tRNAs. The polypeptide is Exportin-T (xpot) (Danio rerio (Zebrafish)).